Consider the following 508-residue polypeptide: Photosystem II CP47 reaction center protein (508 aa).

The next 6 helical transmembrane spans lie at 21–36 (SVHI…WAGS), 101–115 (IVFS…IWHW), 140–156 (GIHL…FGAF), 203–218 (IAAG…FHLS), 237–252 (VLSS…AFVV), and 457–472 (SFAL…HGAR).

This sequence belongs to the PsbB/PsbC family. PsbB subfamily. As to quaternary structure, PSII is composed of 1 copy each of membrane proteins PsbA, PsbB, PsbC, PsbD, PsbE, PsbF, PsbH, PsbI, PsbJ, PsbK, PsbL, PsbM, PsbT, PsbX, PsbY, PsbZ, Psb30/Ycf12, at least 3 peripheral proteins of the oxygen-evolving complex and a large number of cofactors. It forms dimeric complexes. Binds multiple chlorophylls. PSII binds additional chlorophylls, carotenoids and specific lipids. is required as a cofactor.

It localises to the plastid. Its subcellular location is the chloroplast thylakoid membrane. Functionally, one of the components of the core complex of photosystem II (PSII). It binds chlorophyll and helps catalyze the primary light-induced photochemical processes of PSII. PSII is a light-driven water:plastoquinone oxidoreductase, using light energy to abstract electrons from H(2)O, generating O(2) and a proton gradient subsequently used for ATP formation. In Vitis vinifera (Grape), this protein is Photosystem II CP47 reaction center protein.